Reading from the N-terminus, the 156-residue chain is Aspartate 1-decarboxylase (156 aa).

The Schiff-base intermediate with substrate; via pyruvic acid role is filled by S26. S26 bears the Pyruvic acid (Ser) mark. T58 is a substrate binding site. The active-site Proton donor is the Y59. 74–76 contributes to the substrate binding site; that stretch reads GGA.

The protein belongs to the PanD family. As to quaternary structure, heterooctamer of four alpha and four beta subunits. Pyruvate is required as a cofactor. Post-translationally, is synthesized initially as an inactive proenzyme, which is activated by self-cleavage at a specific serine bond to produce a beta-subunit with a hydroxyl group at its C-terminus and an alpha-subunit with a pyruvoyl group at its N-terminus.

Its subcellular location is the cytoplasm. The catalysed reaction is L-aspartate + H(+) = beta-alanine + CO2. It functions in the pathway cofactor biosynthesis; (R)-pantothenate biosynthesis; beta-alanine from L-aspartate: step 1/1. Catalyzes the pyruvoyl-dependent decarboxylation of aspartate to produce beta-alanine. This Gloeothece citriformis (strain PCC 7424) (Cyanothece sp. (strain PCC 7424)) protein is Aspartate 1-decarboxylase.